We begin with the raw amino-acid sequence, 639 residues long: 3-hydroxybenzoate 4-monooxygenase (639 aa).

Residues 34 to 64, Gln-73, Val-166, Asn-212, 269 to 271, Tyr-317, Asp-349, and Ser-365 contribute to the FAD site; these read DVLI…IVEQ and RFY.

Belongs to the PheA/TfdB FAD monooxygenase family. As to quaternary structure, homodimer. The cofactor is FAD.

The enzyme catalyses 3-hydroxybenzoate + NADPH + O2 + H(+) = 3,4-dihydroxybenzoate + NADP(+) + H2O. Functionally, converts 3-hydroxybenzoate (m-hydroxybenzoate), and to a lesser extent p-hydroxybenzoate, to 3,4-dihydroxybenzoate (protocatechuate). Also acts on a number of analogs of 3-hydroxybenzoate substituted in the 2, 4, 5 and 6 positions. The chain is 3-hydroxybenzoate 4-monooxygenase (mobA) from Comamonas testosteroni (Pseudomonas testosteroni).